A 131-amino-acid polypeptide reads, in one-letter code: MYLIFIIMFGYRRFIKFVFPFPATGIYFHGYTFPIGKLPSDLQLWKVFRRMIKYNGDHYLVALPILMLQPSMYVCTYVCKEVDIEKESRGERERTKKLKLFEIVLYYLSVCTPYWWNITAKFFIPFSHSSP.

3 consecutive transmembrane segments (helical) span residues 13-35 (RFIK…TFPI), 60-79 (LVAL…TYVC), and 100-119 (LFEI…WNIT).

It localises to the membrane. This is an uncharacterized protein from Saccharomyces cerevisiae (strain ATCC 204508 / S288c) (Baker's yeast).